We begin with the raw amino-acid sequence, 354 residues long: Protein PHLOEM PROTEIN 2-LIKE A8 (354 aa).

The region spanning 12–179 is the TIR domain; it reads TGPQVFINFR…EMILEIQKAL (168 aa). The active site involves glutamate 86.

It carries out the reaction NAD(+) + H2O = ADP-D-ribose + nicotinamide + H(+). The sequence is that of Protein PHLOEM PROTEIN 2-LIKE A8 (PP2A8) from Arabidopsis thaliana (Mouse-ear cress).